A 1887-amino-acid chain; its full sequence is Bifunctional serine/threonine-protein kinase/NEDD4-like E3 ubiquitin-protein ligase (1887 aa).

Disordered regions lie at residues 19 to 55 (TPQV…TTNF) and 72 to 98 (TDNY…TKEN). Composition is skewed to low complexity over residues 26–54 (NNSN…STTN) and 72–97 (TDNY…NTKE). 6 RCC1 repeats span residues 206 to 260 (QGNL…ALTI), 262 to 314 (GKVY…NNNN), 356 to 409 (KGLL…VLTN), 411 to 470 (GLVF…AISD), 472 to 528 (NDTY…AMSI), and 529 to 581 (DGSL…IVEK). The disordered stretch occupies residues 299–333 (NNNNNNNNNNSTNNNNNNNNDGAQQQFSLSQNSSS). Disordered regions lie at residues 594-619 (LPSS…SDSN), 823-858 (VLVH…KNGT), and 1030-1088 (DDDN…NNNN). Residues 825 to 839 (VHQDEKQQQREKSET) show a composition bias toward basic and acidic residues. Residues 840–852 (ELEEEQDEEEEDS) are compositionally biased toward acidic residues. Residues 1036-1088 (ENNSVNNNSNNNNNNNNNNNNNNNNNNNNNNNIDNNINSNSINDSSNNNNNNN) show a composition bias toward low complexity. The Protein kinase domain occupies 1158 to 1437 (YDIIKTLSTH…AHQIAVHPYF (280 aa)). Residues 1164–1172 (LSTHPHNVY) and lysine 1184 each bind ATP. The active-site Proton acceptor is the aspartate 1281. In terms of domain architecture, HECT spans 1501–1887 (ESNKLFCRLE…LEYVDGFAFI (387 aa)). The segment at 1586-1628 (NNNNNNEENNNNNNNNNNNNNNNNNNNNNNNNNNNNNNNNNEE) is disordered. The active-site Glycyl thioester intermediate is cysteine 1855.

The protein in the N-terminal section; belongs to the protein kinase superfamily. Ser/Thr protein kinase family. This sequence in the C-terminal section; belongs to the protein kinase superfamily. CAMK Ser/Thr protein kinase family.

The enzyme catalyses L-seryl-[protein] + ATP = O-phospho-L-seryl-[protein] + ADP + H(+). It catalyses the reaction L-threonyl-[protein] + ATP = O-phospho-L-threonyl-[protein] + ADP + H(+). It carries out the reaction S-ubiquitinyl-[E2 ubiquitin-conjugating enzyme]-L-cysteine + [acceptor protein]-L-lysine = [E2 ubiquitin-conjugating enzyme]-L-cysteine + N(6)-ubiquitinyl-[acceptor protein]-L-lysine.. Its pathway is protein modification; protein ubiquitination. This is Bifunctional serine/threonine-protein kinase/NEDD4-like E3 ubiquitin-protein ligase from Dictyostelium discoideum (Social amoeba).